We begin with the raw amino-acid sequence, 209 residues long: FMN-dependent NADH:quinone oxidoreductase (209 aa).

Residues serine 9 and 15 to 17 (SNS) each bind FMN.

The protein belongs to the azoreductase type 1 family. In terms of assembly, homodimer. The cofactor is FMN.

It catalyses the reaction 2 a quinone + NADH + H(+) = 2 a 1,4-benzosemiquinone + NAD(+). The enzyme catalyses N,N-dimethyl-1,4-phenylenediamine + anthranilate + 2 NAD(+) = 2-(4-dimethylaminophenyl)diazenylbenzoate + 2 NADH + 2 H(+). In terms of biological role, quinone reductase that provides resistance to thiol-specific stress caused by electrophilic quinones. Functionally, also exhibits azoreductase activity. Catalyzes the reductive cleavage of the azo bond in aromatic azo compounds to the corresponding amines. The polypeptide is FMN-dependent NADH:quinone oxidoreductase (Bordetella bronchiseptica (strain ATCC BAA-588 / NCTC 13252 / RB50) (Alcaligenes bronchisepticus)).